The following is a 545-amino-acid chain: Ubiquitin carboxyl-terminal hydrolase 17-like protein C (545 aa).

A USP domain is found at 51 to 348 (CGLQNTGNSC…NAYVLFYVQQ (298 aa)). Catalysis depends on Cys-60, which acts as the Nucleophile. His-307 acts as the Proton acceptor in catalysis. 2 disordered regions span residues 368–442 (DPEY…QKLG) and 489–539 (WGRD…KQGQ). A compositionally biased stretch (basic residues) spans 374–385 (KKSRRKKHKKKS). Composition is skewed to basic and acidic residues over residues 393-404 (EPCKNREKRATK) and 489-505 (WGRD…HNAD). The span at 508-519 (LTSQDPVNTGQL) shows a compositional bias: polar residues. The segment covering 524-537 (GRRRSKKGKNKNKQ) has biased composition (basic residues).

Belongs to the peptidase C19 family. USP17 subfamily. In terms of tissue distribution, expressed in T cells.

It localises to the nucleus. It is found in the endoplasmic reticulum. It carries out the reaction Thiol-dependent hydrolysis of ester, thioester, amide, peptide and isopeptide bonds formed by the C-terminal Gly of ubiquitin (a 76-residue protein attached to proteins as an intracellular targeting signal).. In terms of biological role, deubiquitinating enzyme that removes conjugated ubiquitin from specific proteins to regulate different cellular processes. Important for preimplantation stage embryonic development. The sequence is that of Ubiquitin carboxyl-terminal hydrolase 17-like protein C from Mus musculus (Mouse).